Reading from the N-terminus, the 127-residue chain is UPF0102 protein Mmar10_3014 (127 aa).

The protein belongs to the UPF0102 family.

This chain is UPF0102 protein Mmar10_3014, found in Maricaulis maris (strain MCS10) (Caulobacter maris).